The primary structure comprises 545 residues: Chaperonin GroEL (545 aa).

ATP-binding positions include 30–33 (TLGP), Lys-51, 87–91 (DGTTT), Gly-415, and Asp-496.

It belongs to the chaperonin (HSP60) family. As to quaternary structure, forms a cylinder of 14 subunits composed of two heptameric rings stacked back-to-back. Interacts with the co-chaperonin GroES.

The protein localises to the cytoplasm. It catalyses the reaction ATP + H2O + a folded polypeptide = ADP + phosphate + an unfolded polypeptide.. Its function is as follows. Together with its co-chaperonin GroES, plays an essential role in assisting protein folding. The GroEL-GroES system forms a nano-cage that allows encapsulation of the non-native substrate proteins and provides a physical environment optimized to promote and accelerate protein folding. The chain is Chaperonin GroEL from Haemophilus influenzae (strain 86-028NP).